Here is a 505-residue protein sequence, read N- to C-terminus: MPVEENYQPLLQEEEERAYDSDEKVLIIGVDSDTESGGSTVLPPFSWKKLWLFTGPGFLMSIAFLDPGNLEGDLQAGAIAGYSLLWLLLWATAMGLLVQLLSARLGVATGRHLAELCREEYPTWASMVLWIMAELALIGADIQEVIGSAIAIKILSNGFVPLWAGVTITACDCFIFLFLENYGVRKLEAVFAVLIGIMAVTFGWMFADAKPSASELFLGILIPKLSSRTIQQAVGVVGCIIMPHNVFLHSALVQSREIDHNKKDRVQEALRYYSIESTTALVISFVINLFVTTVFAKGFYGTELANSIGLVNAGQYLQDKYGGGFFPILYIWGIGLLAAGQSSTITGTYAGQFIMGGFLNLRLKKWLRALITRSCAIIPTMIVALVFDTSEDSLDVLNEWLNVLQSIQIPFALIPLLCLVSKEQIMGTFKIGPILKMVAWLVAALVMVINGYLLLDFFFNEVTGVAFTTVVCGFTGAYVAFIIYLISRGFTCFSRCCPSKQIEVE.

The next 12 helical transmembrane spans lie at 50 to 70 (LWLF…PGNL), 78 to 98 (AIAG…GLLV), 127 to 147 (MVLW…EVIG), 159 to 179 (FVPL…FLFL), 187 to 207 (LEAV…WMFA), 233 to 253 (AVGV…SALV), 280 to 300 (ALVI…KGFY), 321 to 341 (YGGG…AAGQ), 369 to 389 (ALIT…VFDT), 400 to 420 (WLNV…LCLV), 439 to 459 (AWLV…DFFF), and 466 to 486 (AFTT…IYLI).

This sequence belongs to the NRAMP (TC 2.A.55) family. Expressed in roots, stems, buds and leaves.

The protein localises to the vacuole membrane. It carries out the reaction Mn(2+)(in) = Mn(2+)(out). The catalysed reaction is Fe(2+)(in) = Fe(2+)(out). Divalent metal transporter. Can transport manganese (Mn) and iron (Fe). Involved in the release of metals stored in the vacuole. This chain is Metal transporter Nramp3.2, found in Populus trichocarpa (Western balsam poplar).